Consider the following 185-residue polypeptide: Large ribosomal subunit protein uL5 (185 aa).

The protein belongs to the universal ribosomal protein uL5 family. Part of the 50S ribosomal subunit; part of the 5S rRNA/L5/L18/L25 subcomplex. Contacts the 5S rRNA and the P site tRNA. Forms a bridge to the 30S subunit in the 70S ribosome.

Functionally, this is one of the proteins that bind and probably mediate the attachment of the 5S RNA into the large ribosomal subunit, where it forms part of the central protuberance. In the 70S ribosome it contacts protein S13 of the 30S subunit (bridge B1b), connecting the 2 subunits; this bridge is implicated in subunit movement. Contacts the P site tRNA; the 5S rRNA and some of its associated proteins might help stabilize positioning of ribosome-bound tRNAs. The chain is Large ribosomal subunit protein uL5 from Rhizobium etli (strain ATCC 51251 / DSM 11541 / JCM 21823 / NBRC 15573 / CFN 42).